Reading from the N-terminus, the 204-residue chain is FMN-dependent NADH:quinone oxidoreductase (204 aa).

Position 9 (serine 9) interacts with FMN.

The protein belongs to the azoreductase type 1 family. As to quaternary structure, homodimer. FMN serves as cofactor.

The catalysed reaction is 2 a quinone + NADH + H(+) = 2 a 1,4-benzosemiquinone + NAD(+). It catalyses the reaction N,N-dimethyl-1,4-phenylenediamine + anthranilate + 2 NAD(+) = 2-(4-dimethylaminophenyl)diazenylbenzoate + 2 NADH + 2 H(+). In terms of biological role, quinone reductase that provides resistance to thiol-specific stress caused by electrophilic quinones. Its function is as follows. Also exhibits azoreductase activity. Catalyzes the reductive cleavage of the azo bond in aromatic azo compounds to the corresponding amines. This is FMN-dependent NADH:quinone oxidoreductase from Thiobacillus denitrificans (strain ATCC 25259 / T1).